Consider the following 253-residue polypeptide: 1-(5-phosphoribosyl)-5-[(5-phosphoribosylamino)methylideneamino] imidazole-4-carboxamide isomerase (253 aa).

Catalysis depends on aspartate 19, which acts as the Proton acceptor. The active-site Proton donor is the aspartate 141.

This sequence belongs to the HisA/HisF family.

The protein resides in the cytoplasm. The enzyme catalyses 1-(5-phospho-beta-D-ribosyl)-5-[(5-phospho-beta-D-ribosylamino)methylideneamino]imidazole-4-carboxamide = 5-[(5-phospho-1-deoxy-D-ribulos-1-ylimino)methylamino]-1-(5-phospho-beta-D-ribosyl)imidazole-4-carboxamide. Its pathway is amino-acid biosynthesis; L-histidine biosynthesis; L-histidine from 5-phospho-alpha-D-ribose 1-diphosphate: step 4/9. The sequence is that of 1-(5-phosphoribosyl)-5-[(5-phosphoribosylamino)methylideneamino] imidazole-4-carboxamide isomerase from Rhodopirellula baltica (strain DSM 10527 / NCIMB 13988 / SH1).